The primary structure comprises 126 residues: Large ribosomal subunit protein bL21 (126 aa).

A disordered region spans residues 105–126 (KKPSVGPRAKRTKAAPAAEAAE).

As to quaternary structure, contacts protein L20. Part of the 50S ribosomal subunit.

In terms of biological role, this protein binds to 23S rRNA in the presence of protein L20. The sequence is that of Large ribosomal subunit protein bL21 from Rhodopseudomonas palustris (strain ATCC BAA-98 / CGA009).